A 225-amino-acid polypeptide reads, in one-letter code: MEPIKNIPRLCRTLGYEFTEQAFLDQALTHRSASNKHNERLEFLGDSILSIVISDALYHQFPTATEGDLSRMRATLVCGKMLAEIAIEFKLGDYLKLGPGELKSGGFRRESILADAVEAIIGAIYLDSEIEKCRSLVLKWYESRLKVIEPINQKDPKTLLQEHLQKFRKPLPVYKVVHTEGDAHEQTFTVECIVEDLSQAVVGVASSRRKAEQSAAAQVLELMKK.

The region spanning 7 to 129 (IPRLCRTLGY…IIGAIYLDSE (123 aa)) is the RNase III domain. Position 42 (Glu42) interacts with Mg(2+). The active site involves Asp46. Residues Asp115 and Glu118 each coordinate Mg(2+). Glu118 is an active-site residue. The DRBM domain occupies 155–225 (DPKTLLQEHL…AAQVLELMKK (71 aa)).

This sequence belongs to the ribonuclease III family. As to quaternary structure, homodimer. The cofactor is Mg(2+).

It localises to the cytoplasm. It catalyses the reaction Endonucleolytic cleavage to 5'-phosphomonoester.. Its function is as follows. Digests double-stranded RNA. Involved in the processing of primary rRNA transcript to yield the immediate precursors to the large and small rRNAs (23S and 16S). Processes some mRNAs, and tRNAs when they are encoded in the rRNA operon. Processes pre-crRNA and tracrRNA of type II CRISPR loci if present in the organism. This Shewanella halifaxensis (strain HAW-EB4) protein is Ribonuclease 3.